Reading from the N-terminus, the 291-residue chain is Light-independent protochlorophyllide reductase iron-sulfur ATP-binding protein (291 aa).

Residues 10 to 15 and Lys-39 contribute to the ATP site; that span reads GIGKST. Ser-14 contacts Mg(2+). [4Fe-4S] cluster contacts are provided by Cys-95 and Cys-129. 180–181 is an ATP binding site; sequence NR.

The protein belongs to the NifH/BchL/ChlL family. In terms of assembly, homodimer. Protochlorophyllide reductase is composed of three subunits; ChlL, ChlN and ChlB. [4Fe-4S] cluster is required as a cofactor.

The protein resides in the plastid. It localises to the chloroplast. The catalysed reaction is chlorophyllide a + oxidized 2[4Fe-4S]-[ferredoxin] + 2 ADP + 2 phosphate = protochlorophyllide a + reduced 2[4Fe-4S]-[ferredoxin] + 2 ATP + 2 H2O. The protein operates within porphyrin-containing compound metabolism; chlorophyll biosynthesis (light-independent). Functionally, component of the dark-operative protochlorophyllide reductase (DPOR) that uses Mg-ATP and reduced ferredoxin to reduce ring D of protochlorophyllide (Pchlide) to form chlorophyllide a (Chlide). This reaction is light-independent. The L component serves as a unique electron donor to the NB-component of the complex, and binds Mg-ATP. The polypeptide is Light-independent protochlorophyllide reductase iron-sulfur ATP-binding protein (Larix decidua (European larch)).